The sequence spans 92 residues: Protein S100-B (92 aa).

Residue serine 2 is modified to Blocked amino end (Ser); alternate. An N-acetylserine; alternate modification is found at serine 2. EF-hand domains are found at residues aspartate 13 to isoleucine 48 and lysine 49 to alanine 84. Histidine 16 is a Zn(2+) binding site. Residues serine 19, glutamate 22, and aspartate 24 each coordinate Ca(2+). Histidine 26 is a binding site for Zn(2+). Ca(2+)-binding residues include lysine 27, glutamate 32, aspartate 62, aspartate 64, aspartate 66, glutamate 68, and glutamate 73. Residues histidine 86 and histidine 91 each coordinate Zn(2+).

The protein belongs to the S-100 family. Dimer of either two alpha chains, or two beta chains, or one alpha and one beta chain. The S100B dimer binds two molecules of STK38. Interacts with CACYBP in a calcium-dependent manner. Interacts with ATAD3A; this interaction probably occurs in the cytosol prior to ATAD3A mitochondrial targeting. Interacts with S100A6. The S100B dimer interacts with two molecules of CAPZA1. Interacts with AGER. Interacts with PPP5C (via TPR repeats); the interaction is calcium-dependent and modulates PPP5C activity. Interacts with TPPP; this interaction inhibits TPPP dimerization. Interacts with isoform CLSTN3beta of CLSTN3; interaction promotes secretion. In terms of tissue distribution, although predominant among the water-soluble brain proteins, S100 is also found in a variety of other tissues.

The protein resides in the cytoplasm. It localises to the nucleus. Its subcellular location is the secreted. Its function is as follows. Small zinc- and- and calcium-binding protein that is highly expressed in astrocytes and constitutes one of the most abundant soluble proteins in brain. Weakly binds calcium but binds zinc very tightly-distinct binding sites with different affinities exist for both ions on each monomer. Physiological concentrations of potassium ion antagonize the binding of both divalent cations, especially affecting high-affinity calcium-binding sites. Acts as a neurotrophic factor that promotes astrocytosis and axonal proliferation. Involved in innervation of thermogenic adipose tissue by acting as an adipocyte-derived neurotrophic factor that promotes sympathetic innervation of adipose tissue. Binds to and initiates the activation of STK38 by releasing autoinhibitory intramolecular interactions within the kinase. Interaction with AGER after myocardial infarction may play a role in myocyte apoptosis by activating ERK1/2 and p53/TP53 signaling. Could assist ATAD3A cytoplasmic processing, preventing aggregation and favoring mitochondrial localization. May mediate calcium-dependent regulation on many physiological processes by interacting with other proteins, such as TPR-containing proteins, and modulating their activity. This Homo sapiens (Human) protein is Protein S100-B.